The sequence spans 206 residues: NKYCNIKCSKVAHTVCQYGESTKPSSKCNKVSITSVGVTEEEKKLIVDEHNRFRQKVAQGLETRGNPGPQPAASDMNNLVWNDELAYIAQVWASQCQFFVHDKCRNTAQYQVGQNIAYSASTAAYPGIVSLIVLWENEVKDFNYSQGITKENFSKVGHYTQVVWAKTKEVGCGSIKYIEKGMKSHYLVCNYGPAGNYMGQPIYTKK.

4 cysteine pairs are disulfide-bonded: cysteine 4-cysteine 16, cysteine 8-cysteine 104, cysteine 28-cysteine 96, and cysteine 172-cysteine 189. Residues 48–191 enclose the SCP domain; the sequence is DEHNRFRQKV…MKSHYLVCNY (144 aa).

It belongs to the CRISP family. Venom allergen 5-like subfamily. Expressed by the venom gland.

It localises to the secreted. This is Venom allergen 5 2 from Polybia paulista (Neotropical social wasp).